The following is a 613-amino-acid chain: Ribosome-associated molecular chaperone SSB1 (613 aa).

The interval 1–391 is nucleotide binding domain (NBD); that stretch reads MADGVFQGAI…ILTGQSTNDD (391 aa). Residues 16 to 18, Lys73, 205 to 207, 271 to 278, and Gly342 each bind ATP; these read TTY, GGT, and ERAKRSLS. The inter-domain linker stretch occupies residues 392 to 402; the sequence is TKDLLLLDVIP. The interval 403 to 613 is substrate binding domain (SBD); that stretch reads LSLGVAMQGN…RAVTKGMATR (211 aa). The tract at residues 516 to 612 is lid domain (SBDalpha); sequence TEEIEKMISD…KRAVTKGMAT (97 aa). Positions 574–582 match the Nuclear export signal motif; sequence IEAALSDAL.

The protein belongs to the heat shock protein 70 family. Ssb-type Hsp70 subfamily. In terms of assembly, binds to ribosomes. Binds close to the ribosomal tunnel exit via contacts with both ribosomal proteins and rRNA. Directly interacts with nascent polypeptides. This interaction is dependent on the ribosome-associated complex (RAC). Interacts with SSE1. Interacts with FES1.

The protein localises to the cytoplasm. It catalyses the reaction ATP + H2O = ADP + phosphate + H(+). Ribosome-bound, Hsp70-type chaperone that assists in the cotranslational folding of newly synthesized proteins in the cytosol. Stimulates folding by interacting with nascent chains, binding to short, largely hydrophobic sequences exposed by unfolded proteins, thereby stabilizing longer, more slowly translated, and aggregation-prone nascent polypeptides and domains that cannot fold stably until fully synthesized. The Hsp70-protein substrate interaction depends on ATP-binding and on allosteric regulation between the NBD and the SBD. The ATP-bound state is characterized by a fast exchange rate of substrate (low affinity state), while in the ADP-bound state exchange is much slower (high affinity state). During the Hsp70 cycle, the chaperone switches between the ATP-bound state (open conformation) and the ADP-bound state (closed conformation) by major conformational rearrangements involving mainly the lid domain. Ssb cooperates with a specific Hsp40/Hsp70 co-chaperone termed the ribosome-associated complex (RAC), which stimulates the ATPase activity of the ribosome-associated pool of Ssbs and switches it to the high affinity substrate binding state. Hsp110 chaperone SSE1 and FES1 act as nucleotide exchange factors that cause substrate release. This is Ribosome-associated molecular chaperone SSB1 (SSB1) from Candida albicans (strain WO-1) (Yeast).